We begin with the raw amino-acid sequence, 227 residues long: DNA packaging ATPase P9 (227 aa).

Residue 16–23 (GKTGTGKT) participates in ATP binding.

As to quaternary structure, heterodimer of P6 and P9; further multimerizes as hexamers of heterodimers. Part of the dodecameric portal complex that is composed of the packaging efficiency factor P6, the DNA packaging ATPase P9, and the internal heterododecamer P20/P22 which spans the virion inner membrane.

The protein resides in the virion. Together with the packaging efficiency factor P6, forms the external part of the portal vertex that is embeded in the capsid and which plays critical roles in genome packaging and genome ejection. Both proteins multimerize as a single ring-shaped heterdodecamer arranged around a central channel. The sequence is that of DNA packaging ATPase P9 (IX) from Enterobacteria phage PRD1 (Bacteriophage PRD1).